We begin with the raw amino-acid sequence, 140 residues long: Probable prefoldin subunit 6 (140 aa).

This sequence belongs to the prefoldin subunit beta family. In terms of assembly, heterohexamer of two PFD-alpha type and four PFD-beta type subunits.

Functionally, binds specifically to cytosolic chaperonin (c-CPN) and transfers target proteins to it. Binds to nascent polypeptide chain and promotes folding in an environment in which there are many competing pathways for nonnative proteins. The polypeptide is Probable prefoldin subunit 6 (pfdn6) (Dictyostelium discoideum (Social amoeba)).